Reading from the N-terminus, the 579-residue chain is General transcription and DNA repair factor IIH subunit TFB1-3 (579 aa).

BSD domains are found at residues 107-161 (LTPA…GKDS) and 186-238 (RTNR…YLYS).

This sequence belongs to the TFB1 family. As to quaternary structure, component of the 7-subunit TFIIH core complex composed of XPB, XPD, TFB1/GTF2H1, GTF2H2/P44, TFB4/GTF2H3, TFB2/GTF2H4 and TFB5/GTF2H5, which is active in NER. The core complex associates with the 3-subunit CDK-activating kinase (CAK) module composed of CYCH1/cyclin H1, CDKD and MAT1/At4g30820 to form the 10-subunit holoenzyme (holo-TFIIH) active in transcription.

The protein resides in the nucleus. Functionally, component of the general transcription and DNA repair factor IIH (TFIIH) core complex, which is involved in general and transcription-coupled nucleotide excision repair (NER) of damaged DNA and, when complexed to CAK, in RNA transcription by RNA polymerase II. In NER, TFIIH acts by opening DNA around the lesion to allow the excision of the damaged oligonucleotide and its replacement by a new DNA fragment. In transcription, TFIIH has an essential role in transcription initiation. When the pre-initiation complex (PIC) has been established, TFIIH is required for promoter opening and promoter escape. Phosphorylation of the C-terminal tail (CTD) of the largest subunit of RNA polymerase II by the kinase module CAK controls the initiation of transcription. This chain is General transcription and DNA repair factor IIH subunit TFB1-3, found in Arabidopsis thaliana (Mouse-ear cress).